The primary structure comprises 229 residues: Triosephosphate isomerase (229 aa).

16–18 serves as a coordination point for substrate; the sequence is NFK. The active-site Electrophile is the H100. The active-site Proton acceptor is the E148. Residues I153, G188, and 209 to 210 each bind substrate; that span reads AS.

It belongs to the triosephosphate isomerase family. As to quaternary structure, homotetramer; dimer of dimers.

It localises to the cytoplasm. It catalyses the reaction D-glyceraldehyde 3-phosphate = dihydroxyacetone phosphate. It functions in the pathway carbohydrate biosynthesis; gluconeogenesis. The protein operates within carbohydrate degradation; glycolysis; D-glyceraldehyde 3-phosphate from glycerone phosphate: step 1/1. In terms of biological role, involved in the gluconeogenesis. Catalyzes stereospecifically the conversion of dihydroxyacetone phosphate (DHAP) to D-glyceraldehyde-3-phosphate (G3P). The sequence is that of Triosephosphate isomerase from Methanothermobacter thermautotrophicus (strain ATCC 29096 / DSM 1053 / JCM 10044 / NBRC 100330 / Delta H) (Methanobacterium thermoautotrophicum).